Here is a 720-residue protein sequence, read N- to C-terminus: 1,4-alpha-glucan branching enzyme GlgB (720 aa).

Catalysis depends on Asp-400, which acts as the Nucleophile. Catalysis depends on Glu-453, which acts as the Proton donor.

The protein belongs to the glycosyl hydrolase 13 family. GlgB subfamily. Monomer.

The catalysed reaction is Transfers a segment of a (1-&gt;4)-alpha-D-glucan chain to a primary hydroxy group in a similar glucan chain.. The protein operates within glycan biosynthesis; glycogen biosynthesis. In terms of biological role, catalyzes the formation of the alpha-1,6-glucosidic linkages in glycogen by scission of a 1,4-alpha-linked oligosaccharide from growing alpha-1,4-glucan chains and the subsequent attachment of the oligosaccharide to the alpha-1,6 position. The chain is 1,4-alpha-glucan branching enzyme GlgB from Chlamydia pneumoniae (Chlamydophila pneumoniae).